The following is a 243-amino-acid chain: DUF724 domain-containing protein 5 (243 aa).

Basic and acidic residues predominate over residues 1 to 24 (MREKHYSEDNSRKRKRGELEHNSD). A disordered region spans residues 1-51 (MREKHYSEDNSRKRKRGELEHNSDLNETVLPSDWTPDPVKNFAADDDDEET). In terms of domain architecture, DUF724 spans 59–243 (VLPFVKKSPV…DLGVELEDVE (185 aa)). Positions 174-223 (KEMKDESSKKHKAEQEFGEMERKILEVKNKVLELQKQEAALEKQKDATYE) form a coiled coil.

As to quaternary structure, homodimer. As to expression, expressed in leaves, flowers and siliques.

The protein localises to the nucleus. Functionally, may be involved in the polar growth of plant cells via transportation of RNAs. The sequence is that of DUF724 domain-containing protein 5 from Arabidopsis thaliana (Mouse-ear cress).